Reading from the N-terminus, the 461-residue chain is Transcription factor GTE3, chloroplastic (461 aa).

Residues 1-11 are compositionally biased toward gly residues; the sequence is MASGPIAGGGV. Positions 1–41 are disordered; the sequence is MASGPIAGGGVSKTKHKWSDSGNKSQKRSKPTVANSNSLGL. Residues 1–51 constitute a chloroplast transit peptide; the sequence is MASGPIAGGGVSKTKHKWSDSGNKSQKRSKPTVANSNSLGLEDNHQMMKIS. One can recognise a Bromo domain in the interval 114-220; it reads KGTVQILKSC…NLFEEKWVPL (107 aa). One can recognise an NET domain in the interval 298 to 379; sequence LVEEASANRD…EYKESLSKKK (82 aa). Positions 376-392 are enriched in basic and acidic residues; that stretch reads SKKKEEQGLDSERDAES. Residues 376–461 form a disordered region; sequence SKKKEEQGLD…SSGHESDTGN (86 aa). Positions 393–412 are enriched in polar residues; the sequence is FHNSVHESNTLVTGLESSKV. The span at 429–451 shows a compositional bias: low complexity; that stretch reads GGSSSSNSSSSGSGSGSSGSDSD. The segment covering 452-461 has biased composition (basic and acidic residues); that stretch reads SSGHESDTGN.

In terms of assembly, interacts with SIZ1 (via PHD domain). Sumoylated by SIZ1. Sumoylation reduces capacity to bind to acetylated histone H3.

Its subcellular location is the plastid. It localises to the chloroplast. Functionally, probable transcription factor that binds to acetylated histone H3. In Arabidopsis thaliana (Mouse-ear cress), this protein is Transcription factor GTE3, chloroplastic (GTE3).